The chain runs to 957 residues: Glycine dehydrogenase (decarboxylating) (957 aa).

The residue at position 708 (K708) is an N6-(pyridoxal phosphate)lysine.

This sequence belongs to the GcvP family. In terms of assembly, the glycine cleavage system is composed of four proteins: P, T, L and H. Requires pyridoxal 5'-phosphate as cofactor.

The enzyme catalyses N(6)-[(R)-lipoyl]-L-lysyl-[glycine-cleavage complex H protein] + glycine + H(+) = N(6)-[(R)-S(8)-aminomethyldihydrolipoyl]-L-lysyl-[glycine-cleavage complex H protein] + CO2. Functionally, the glycine cleavage system catalyzes the degradation of glycine. The P protein binds the alpha-amino group of glycine through its pyridoxal phosphate cofactor; CO(2) is released and the remaining methylamine moiety is then transferred to the lipoamide cofactor of the H protein. The chain is Glycine dehydrogenase (decarboxylating) from Escherichia coli O157:H7.